We begin with the raw amino-acid sequence, 567 residues long: Proline--tRNA ligase (567 aa).

This sequence belongs to the class-II aminoacyl-tRNA synthetase family. ProS type 1 subfamily. In terms of assembly, homodimer.

It localises to the cytoplasm. It catalyses the reaction tRNA(Pro) + L-proline + ATP = L-prolyl-tRNA(Pro) + AMP + diphosphate. In terms of biological role, catalyzes the attachment of proline to tRNA(Pro) in a two-step reaction: proline is first activated by ATP to form Pro-AMP and then transferred to the acceptor end of tRNA(Pro). As ProRS can inadvertently accommodate and process non-cognate amino acids such as alanine and cysteine, to avoid such errors it has two additional distinct editing activities against alanine. One activity is designated as 'pretransfer' editing and involves the tRNA(Pro)-independent hydrolysis of activated Ala-AMP. The other activity is designated 'posttransfer' editing and involves deacylation of mischarged Ala-tRNA(Pro). The misacylated Cys-tRNA(Pro) is not edited by ProRS. The chain is Proline--tRNA ligase from Stenotrophomonas maltophilia (strain R551-3).